A 287-amino-acid chain; its full sequence is ATP synthase gamma chain (287 aa).

It belongs to the ATPase gamma chain family. As to quaternary structure, F-type ATPases have 2 components, CF(1) - the catalytic core - and CF(0) - the membrane proton channel. CF(1) has five subunits: alpha(3), beta(3), gamma(1), delta(1), epsilon(1). CF(0) has three main subunits: a, b and c.

The protein resides in the cell inner membrane. Functionally, produces ATP from ADP in the presence of a proton gradient across the membrane. The gamma chain is believed to be important in regulating ATPase activity and the flow of protons through the CF(0) complex. The polypeptide is ATP synthase gamma chain (Methylococcus capsulatus (strain ATCC 33009 / NCIMB 11132 / Bath)).